We begin with the raw amino-acid sequence, 404 residues long: Queuine tRNA-ribosyltransferase catalytic subunit (404 aa).

Asp98 (proton acceptor) is an active-site residue. Substrate-binding positions include 98-102 (DSGGF), Asp152, Gln195, and Gly222. The RNA binding stretch occupies residues 253–259 (GVGYAED). The active-site Nucleophile is Asp272. Residues 277-281 (TRTAR) are RNA binding; important for wobble base 34 recognition. Zn(2+)-binding residues include Cys310, Cys312, Cys315, and His347.

Belongs to the queuine tRNA-ribosyltransferase family. As to quaternary structure, heterodimer of a catalytic subunit and an accessory subunit. It depends on Zn(2+) as a cofactor.

Its subcellular location is the cytoplasm. The protein resides in the nucleus. It carries out the reaction guanosine(34) in tRNA + queuine = queuosine(34) in tRNA + guanine. Functionally, catalytic subunit of the queuine tRNA-ribosyltransferase (TGT) that catalyzes the base-exchange of a guanine (G) residue with queuine (Q) at position 34 (anticodon wobble position) in tRNAs with GU(N) anticodons (tRNA-Asp, -Asn, -His and -Tyr), resulting in the hypermodified nucleoside queuosine (7-(((4,5-cis-dihydroxy-2-cyclopenten-1-yl)amino)methyl)-7-deazaguanosine). Catalysis occurs through a double-displacement mechanism. The nucleophile active site attacks the C1' of nucleotide 34 to detach the guanine base from the RNA, forming a covalent enzyme-RNA intermediate. The proton acceptor active site deprotonates the incoming queuine, allowing a nucleophilic attack on the C1' of the ribose to form the product. The chain is Queuine tRNA-ribosyltransferase catalytic subunit from Schizosaccharomyces pombe (strain 972 / ATCC 24843) (Fission yeast).